A 179-amino-acid chain; its full sequence is Putative cleavage and polyadenylation specificity factor subunit 4-like protein (179 aa).

5 consecutive C3H1-type zinc fingers follow at residues 35–61 (KSAS…RHDR), 62–89 (GEKM…HQYD), 90–117 (LTRM…HVKP), 118–145 (AFKS…HVPR), and 146–169 (IMCL…QKIR).

This sequence belongs to the CPSF4/YTH1 family.

The protein is Putative cleavage and polyadenylation specificity factor subunit 4-like protein (CPSF4L) of Homo sapiens (Human).